The following is a 183-amino-acid chain: Ribosome rescue factor SmrB (183 aa).

The Smr domain occupies 98–173; it reads LDLHGLTQLQ…GDAALLVLIE (76 aa).

This sequence belongs to the SmrB family. Associates with collided ribosomes, but not with correctly translating polysomes.

Functionally, acts as a ribosome collision sensor. Detects stalled/collided disomes (pairs of ribosomes where the leading ribosome is stalled and a second ribosome has collided with it) and endonucleolytically cleaves mRNA at the 5' boundary of the stalled ribosome. Stalled/collided disomes form a new interface (primarily via the 30S subunits) that binds SmrB. Cleaved mRNA becomes available for tmRNA ligation, leading to ribosomal subunit dissociation and rescue of stalled ribosomes. This is Ribosome rescue factor SmrB from Salmonella arizonae (strain ATCC BAA-731 / CDC346-86 / RSK2980).